The sequence spans 352 residues: MVFRIASSPYTHNQRQTSRIMLLVLLAAVPGIAAQLWFFGWGTLVQILLASVSALLAEALVLKLRKQSVAATLKDNSALLTGLLLAVSIPPLAPWWMVVLGTVFAVIIAKQLYGGLGQNPFNPAMIGYVVLLISFPVQMTSWLPPHEIAVNIPGFIDAIQVIFSGHTTSGGDMNTLRLGIDGISQATPLDTFKTSVRAGHSVEQIMQYPIYSGILAGAGWQWVNLAWLAGGVWLLWQKAIRWHIPLSFLVTLALCATLGWLFSPETLASPQIHLLSGATMLGAFFILTDPVTASTTNRGRLIFGALAGLLVWLIRSFGGYPDGVAFAVLLANITVPLIDYYTRPRVYGHRKG.

4 consecutive transmembrane segments (helical) span residues 20–40 (IMLLVLLAAVPGIAAQLWFFG), 42–62 (GTLVQILLASVSALLAEALVL), 89–109 (IPPLAPWWMVVLGTVFAVIIA), and 123–143 (PAMIGYVVLLISFPVQMTSWL). Threonine 187 carries the FMN phosphoryl threonine modification. 5 helical membrane passes run 214–234 (ILAGAGWQWVNLAWLAGGVWL), 242–262 (WHIPLSFLVTLALCATLGWLF), 267–287 (LASPQIHLLSGATMLGAFFIL), 301–321 (LIFGALAGLLVWLIRSFGGYP), and 322–342 (DGVAFAVLLANITVPLIDYYT).

It belongs to the NqrB/RnfD family. In terms of assembly, the complex is composed of six subunits: RsxA, RsxB, RsxC, RsxD, RsxE and RsxG. It depends on FMN as a cofactor.

It is found in the cell inner membrane. Its function is as follows. Part of a membrane-bound complex that couples electron transfer with translocation of ions across the membrane. Required to maintain the reduced state of SoxR. This chain is Ion-translocating oxidoreductase complex subunit D, found in Escherichia coli O17:K52:H18 (strain UMN026 / ExPEC).